The following is a 504-amino-acid chain: Maturase K (504 aa).

Belongs to the intron maturase 2 family. MatK subfamily.

It localises to the plastid. The protein resides in the chloroplast. Functionally, usually encoded in the trnK tRNA gene intron. Probably assists in splicing its own and other chloroplast group II introns. This chain is Maturase K, found in Prionotes cerinthoides (Climbing heath).